We begin with the raw amino-acid sequence, 224 residues long: Adenylate kinase (224 aa).

10–15 (GSGKST) lines the ATP pocket. An NMP region spans residues 30-59 (SSGDLIRGEIERKSSLGLEMAAYLSRGDLI). AMP-binding positions include Ser-31, Arg-36, 57–59 (DLI), 83–86 (GYPR), and Gln-90. The LID stretch occupies residues 124–161 (GRRICPNCGAVYHITYNPPKVPGICDVCGTKLIQRTDD). Position 125 (Arg-125) interacts with ATP. Positions 128 and 131 each coordinate Zn(2+). ATP is bound at residue 134–135 (VY). The Zn(2+) site is built by Cys-148 and Cys-151. AMP contacts are provided by Arg-158 and Arg-169. An ATP-binding site is contributed by Gly-197.

It belongs to the adenylate kinase family. As to quaternary structure, monomer.

The protein resides in the cytoplasm. It carries out the reaction AMP + ATP = 2 ADP. It functions in the pathway purine metabolism; AMP biosynthesis via salvage pathway; AMP from ADP: step 1/1. Its function is as follows. Catalyzes the reversible transfer of the terminal phosphate group between ATP and AMP. Plays an important role in cellular energy homeostasis and in adenine nucleotide metabolism. The protein is Adenylate kinase of Thermococcus gammatolerans (strain DSM 15229 / JCM 11827 / EJ3).